The sequence spans 391 residues: Protein kinase ORF14 (391 aa).

Residues 109-391 (VPLRHTRGNI…ETLVDEFSKI (283 aa)) enclose the Protein kinase domain. Residue Lys134 coordinates ATP. Catalysis depends on Asp235, which acts as the Proton acceptor.

This sequence belongs to the protein kinase superfamily. Ser/Thr protein kinase family.

It catalyses the reaction L-seryl-[protein] + ATP = O-phospho-L-seryl-[protein] + ADP + H(+). The enzyme catalyses L-threonyl-[protein] + ATP = O-phospho-L-threonyl-[protein] + ADP + H(+). The protein is Protein kinase ORF14 (ORF14) of Ictalurid herpesvirus 1 (strain Auburn) (IcHV-1).